Here is a 355-residue protein sequence, read N- to C-terminus: Peptide chain release factor 1 (355 aa).

N5-methylglutamine is present on glutamine 233. A compositionally biased stretch (basic and acidic residues) spans 281–293 (RRNKEQERADSRR). The tract at residues 281-308 (RRNKEQERADSRRGQIGSGDRSERIRTY) is disordered.

The protein belongs to the prokaryotic/mitochondrial release factor family. In terms of processing, methylated by PrmC. Methylation increases the termination efficiency of RF1.

The protein resides in the cytoplasm. Peptide chain release factor 1 directs the termination of translation in response to the peptide chain termination codons UAG and UAA. The protein is Peptide chain release factor 1 of Rickettsia akari (strain Hartford).